A 64-amino-acid polypeptide reads, in one-letter code: Large ribosomal subunit protein bL32 (64 aa).

The segment covering 1–16 has biased composition (basic residues); the sequence is MAVPKHRKSKAKKRSR. A disordered region spans residues 1–22; it reads MAVPKHRKSKAKKRSRQAANDK.

It belongs to the bacterial ribosomal protein bL32 family.

This Brachyspira hyodysenteriae (strain ATCC 49526 / WA1) protein is Large ribosomal subunit protein bL32.